Reading from the N-terminus, the 307-residue chain is Junctional adhesion molecule 2A (307 aa).

The first 18 residues, 1 to 18 (MLVCVSLLILIHSVPVSP), serve as a signal peptide directing secretion. The Ig-like V-type domain occupies 19–112 (VTVSSRNPKV…EVSAPSDSIS (94 aa)). Topologically, residues 19-226 (VTVSSRNPKV…FQTHDLNVAA (208 aa)) are extracellular. 2 cysteine pairs are disulfide-bonded: Cys-40/Cys-102 and Cys-147/Cys-197. One can recognise an Ig-like C2-type domain in the interval 126–225 (PQTPSCDVPS…TFQTHDLNVA (100 aa)). Residues 227 to 247 (VVSAVVLVCVILFLCAFGVCL) traverse the membrane as a helical segment. Over 248-307 (AHRQGYFSRHRGRSFWIPHCHGVTHISSQNLNPSEHTQHSGYSHPPKEPQDFKHTQSFML) the chain is Cytoplasmic. Polar residues predominate over residues 278-288 (LNPSEHTQHSG). The tract at residues 278-307 (LNPSEHTQHSGYSHPPKEPQDFKHTQSFML) is disordered. The span at 292–301 (PPKEPQDFKH) shows a compositional bias: basic and acidic residues.

Belongs to the immunoglobulin superfamily.

The protein localises to the cell membrane. The protein resides in the cell junction. It localises to the tight junction. Its function is as follows. Junctional adhesion protein that mediates heterotypic cell-cell interactions to regulate different cellular processes. During myogenesis, it is involved in myocyte fusion through the binding of jam3b on neighboring myocytes. The chain is Junctional adhesion molecule 2A (jam2a) from Danio rerio (Zebrafish).